Reading from the N-terminus, the 151-residue chain is Multiprotein-bridging factor 1 (151 aa).

Positions 1–31 (MSDWESHTVIGQKARAGGSGPRANVARTQGQ) are disordered. The HTH cro/C1-type domain occupies 85–139 (IARVRTEKKMSQKDLATKINEKPTVINDYEAGRAIPNQQVLGKMERALGVKLRGK). Residues 96-115 (QKDLATKINEKPTVINDYEA) constitute a DNA-binding region (H-T-H motif).

Belongs to the MBF1 family.

Functionally, transcriptional coactivator that stimulates GCN4-dependent transcriptional activity by bridging the DNA-binding region of GCN4 and TBP (SPT15), thereby recruiting TBP to GCN4-bound promoters. Involved in induction of the ribosome quality control (RQC) pathway; a pathway that degrades nascent peptide chains during problematic translation. Required to prevent stalled ribosomes from frameshifting. This is Multiprotein-bridging factor 1 (MBF1) from Candida glabrata (strain ATCC 2001 / BCRC 20586 / JCM 3761 / NBRC 0622 / NRRL Y-65 / CBS 138) (Yeast).